Consider the following 610-residue polypeptide: UvrABC system protein C (610 aa).

Positions Ser-16 to Val-94 constitute a GIY-YIG domain. Residues Gln-204 to Val-239 form the UVR domain.

This sequence belongs to the UvrC family. As to quaternary structure, interacts with UvrB in an incision complex.

It localises to the cytoplasm. Its function is as follows. The UvrABC repair system catalyzes the recognition and processing of DNA lesions. UvrC both incises the 5' and 3' sides of the lesion. The N-terminal half is responsible for the 3' incision and the C-terminal half is responsible for the 5' incision. This Pectobacterium atrosepticum (strain SCRI 1043 / ATCC BAA-672) (Erwinia carotovora subsp. atroseptica) protein is UvrABC system protein C.